The chain runs to 2596 residues: Cadherin EGF LAG seven-pass G-type receptor fmi-1 (2596 aa).

An N-terminal signal peptide occupies residues 1–22; it reads MMLDRIMFLLFFILSLVIGSFS. Over 23–2229 the chain is Extracellular; that stretch reads EYLDDKYYST…IVRVAQMDNM (2207 aa). 8 Cadherin domains span residues 166–270, 271–375, 376–479, 480–581, 582–682, 683–784, 785–892, and 893–1000; these read QQEK…SPIF, EKDS…APVF, ASDS…APTL, IAAQ…APTF, DKKE…APYF, NDHP…SPQF, TSSS…APTF, and EQLS…KPAL. Residues Asn381, Asn387, Asn562, Asn587, Asn765, and Asn824 are each glycosylated (N-linked (GlcNAc...) asparagine). 2 N-linked (GlcNAc...) asparagine glycosylation sites follow: Asn1030 and Asn1263. An EGF-like 1 domain is found at 1251–1287; the sequence is RIDECYRGRCSNNSTCVAFENTYQCECKPGWIGRHCE. 12 cysteine pairs are disulfide-bonded: Cys1255–Cys1266, Cys1260–Cys1275, Cys1277–Cys1286, Cys1497–Cys1526, Cys1533–Cys1546, Cys1540–Cys1555, Cys1557–Cys1567, Cys1709–Cys1732, Cys1738–Cys1750, Cys1744–Cys1759, Cys1761–Cys1770, and Cys1780–Cys1785. Residues 1333–1526 enclose the Laminin G-like 1 domain; the sequence is SVSFDGEGLL…HKVGQVHEGC (194 aa). Positions 1529 to 1568 constitute an EGF-like 2 domain; sequence RKDFCSTSDGQCSATSKCVNRWGGRICSCPQSVHSTGECV. A Laminin G-like 2 domain is found at 1577-1732; sequence RGHSLFEEES…KKKGKTRAGC (156 aa). 2 EGF-like domains span residues 1734–1771 and 1776–1808; these read VPNRCSVDSICPAESTCHRAWNKHKCKCHKSFVGDTCL and VANVCSSGTCVSSNTTAGYECICPAGKTGKNCQ. A glycan (N-linked (GlcNAc...) asparagine) is linked at Asn1789. Cysteines 1798 and 1807 form a disulfide. N-linked (GlcNAc...) asparagine glycosylation is found at Asn1965, Asn1992, Asn2152, Asn2195, and Asn2228. The GAIN-B domain occupies 2054 to 2219; it reads EYSTLISKLW…TMFVNDQSSS (166 aa). Cys2174 and Cys2201 are joined by a disulfide. The segment at 2174–2219 is GPS; it reads CVRFDEKSGTWTARGAALIGLNLTHAACEYNRIGVFTMFVNDQSSS. The helical transmembrane segment at 2230 to 2250 threads the bilayer; that stretch reads TSPAIAGVALFLCFLSILLTL. The Cytoplasmic portion of the chain corresponds to 2251–2261; that stretch reads SRRSLKTHSVR. Residues 2262–2282 form a helical membrane-spanning segment; that stretch reads IGFILFFAINILNLFFVHKTA. Over 2283–2292 the chain is Extracellular; that stretch reads INQAYCPVRN. Residues 2293 to 2313 form a helical membrane-spanning segment; that stretch reads AMLSFTSSAPFAWLFLYGLYI. The Cytoplasmic segment spans residues 2314 to 2326; sequence YRMLADGSSSPSL. Residues 2327-2347 traverse the membrane as a helical segment; it reads TTSLLVGIVFPCLISFTTFFV. The Extracellular segment spans residues 2348–2356; it reads TDQCSLSPH. A helical transmembrane segment spans residues 2357 to 2377; the sequence is LWLFWCIILPIGLFLLLSFYA. Residues 2378–2401 are Cytoplasmic-facing; it reads AATSVLVSLHKKYDVFVAKYNVKR. The helical transmembrane segment at 2402-2422 threads the bilayer; the sequence is AVFQHFILTIFTLGMTLTGLF. At 2423–2437 the chain is on the extracellular side; sequence ANQLPLPMEIMEISQ. Residues 2438–2458 form a helical membrane-spanning segment; the sequence is SIIYLIAALVIFLWCVCDITT. Over 2459-2596 the chain is Cytoplasmic; the sequence is KASDSNPSMW…KNTTSTFNRE (138 aa).

It belongs to the G-protein coupled receptor 2 family. LN-TM7 subfamily. In terms of tissue distribution, expressed in a region of neuropil around the nerve ring and the ventral cord (at protein level). Expressed in the head, tail, ventral cord, nerve ring and neurons including HSN neurons. Expressed in DA, VA, and VB and weakly in the DB cholinergic neurons. Not expressed in ventral D-type GABAergic motorneurons.

It is found in the cell membrane. It localises to the cell projection. Its subcellular location is the axon. The protein resides in the dendrite. Its function is as follows. During ventral cord development, required for axon fasciculation and navigation, mediating both pioneer and follower axon extension, guidance and track formation. Acts in CEPsh glia and SubL neurons to guide follower axons into the nerve ring. Promotes motorneuron development by positively regulating the extension of the anterior neurite of ventral D-type GABAergic motorneurons along the anterior-posterior axis of the ventral nerve cord. Plays a role in synaptogenesis by regulating synaptic vesicle accumulation at GABAergic and cholinergic neuromuscular junctions. The sequence is that of Cadherin EGF LAG seven-pass G-type receptor fmi-1 from Caenorhabditis elegans.